Reading from the N-terminus, the 437-residue chain is Zinc finger CCCH domain-containing protein 40 (437 aa).

The segment at 6-33 adopts a C3H1-type zinc-finger fold; it reads MYKTKLCILFNKTGDCSRPNCTFAHGNA. Positions 35–107 are disordered; that stretch reads LRRPGESSFT…MPFENRRDKD (73 aa). Residues 48-85 are compositionally biased toward basic and acidic residues; the sequence is HNMDSDLRDRRHNMDSDLRDRLGRQFSPERRPSLDRSG. Positions 145-244 form a coiled coil; that stretch reads NNVLEEQLKD…LGNQLSTYLA (100 aa). S259 carries the post-translational modification Phosphoserine. 2 disordered regions span residues 266–360 and 380–437; these read RNLR…RRRF and EFDD…DDSV. The segment covering 307-319 has biased composition (basic and acidic residues); it reads RGEEEKVENEKKR. Acidic residues-rich tracts occupy residues 333–343 and 383–392; these read EEESGAWNDED and DVAESEEENP. Basic and acidic residues predominate over residues 426-437; the sequence is MEQKKAYDDDSV.

The sequence is that of Zinc finger CCCH domain-containing protein 40 from Arabidopsis thaliana (Mouse-ear cress).